An 828-amino-acid polypeptide reads, in one-letter code: Glycerol-3-phosphate acyltransferase (828 aa).

The HXXXXD motif signature appears at 310 to 315 (HRSHID).

This sequence belongs to the GPAT/DAPAT family.

The protein resides in the cell inner membrane. It catalyses the reaction sn-glycerol 3-phosphate + an acyl-CoA = a 1-acyl-sn-glycero-3-phosphate + CoA. It functions in the pathway phospholipid metabolism; CDP-diacylglycerol biosynthesis; CDP-diacylglycerol from sn-glycerol 3-phosphate: step 1/3. This chain is Glycerol-3-phosphate acyltransferase, found in Pseudomonas putida (strain ATCC 47054 / DSM 6125 / CFBP 8728 / NCIMB 11950 / KT2440).